The primary structure comprises 308 residues: Methionyl-tRNA formyltransferase (308 aa).

109–112 contributes to the (6S)-5,6,7,8-tetrahydrofolate binding site; the sequence is SLLP.

The protein belongs to the Fmt family.

The catalysed reaction is L-methionyl-tRNA(fMet) + (6R)-10-formyltetrahydrofolate = N-formyl-L-methionyl-tRNA(fMet) + (6S)-5,6,7,8-tetrahydrofolate + H(+). Attaches a formyl group to the free amino group of methionyl-tRNA(fMet). The formyl group appears to play a dual role in the initiator identity of N-formylmethionyl-tRNA by promoting its recognition by IF2 and preventing the misappropriation of this tRNA by the elongation apparatus. This chain is Methionyl-tRNA formyltransferase, found in Methylobacillus flagellatus (strain ATCC 51484 / DSM 6875 / VKM B-1610 / KT).